Consider the following 211-residue polypeptide: Abscisic acid receptor PYL7 (211 aa).

The tract at residues 29–180 is START-like; sequence HHCRENQCTS…NLKSLACVSE (152 aa). 2 cysteine pairs are disulfide-bonded: C31–C161 and C36–C161. Residues K65, 93–98, 120–126, and E145 contribute to the abscisate site; these read ATTSTE and RLKNYSS. The short motif at 89–93 is the Gate loop element; it reads SGLPA. A Latch loop motif is present at residues 119–121; the sequence is HRL.

The protein belongs to the PYR/PYL/RCAR abscisic acid intracellular receptor family. As to quaternary structure, homodimer. Binds ABA on one subunit only. Binds to CARs protein in an ABA-independent manner, both at the plasma membrane and in the nucleus. Interacts with ABI1, and possibly with other PP2Cs.

It is found in the cytoplasm. The protein localises to the nucleus. The protein resides in the cell membrane. Receptor for abscisic acid (ABA) required for ABA-mediated responses such as stomatal closure and germination inhibition. Inhibits the activity of group-A protein phosphatases type 2C (PP2Cs) when activated by ABA. This Arabidopsis thaliana (Mouse-ear cress) protein is Abscisic acid receptor PYL7 (PYL7).